We begin with the raw amino-acid sequence, 77 residues long: Conodipine-M alpha chain (77 aa).

A Pyrrolidone carboxylic acid modification is found at Q1. H36 is an active-site residue.

As to quaternary structure, heterodimer of an alpha and a beta chains; probably disulfide-linked. Ca(2+) serves as cofactor. In terms of tissue distribution, expressed by the venom duct.

Its subcellular location is the secreted. The enzyme catalyses a 1,2-diacyl-sn-glycero-3-phosphocholine + H2O = a 1-acyl-sn-glycero-3-phosphocholine + a fatty acid + H(+). Inhibited by linoleoyl amide and MG14. In terms of biological role, heterodimer: conodipine-M catalyzes the calcium-dependent hydrolysis of the 2-acyl groups in 3-sn-phosphoglycerides. This activity may be supported by the alpha chain. Conodipine-M inhibits the binding of isradipine (a ligand specific for L-type calcium channel) to L-type calcium channels. This chain is Conodipine-M alpha chain, found in Conus magus (Magical cone).